The chain runs to 54 residues: Ovomucoid (54 aa).

Residues 4 to 54 (VDCSDYPRPDCTLEYMPLCGSDNKTYGNKCNFCNAVVDSNGTLTLSHFGKC) form the Kazal-like domain. Cystine bridges form between cysteine 6–cysteine 36, cysteine 14–cysteine 33, and cysteine 22–cysteine 54. An N-linked (GlcNAc...) asparagine glycan is attached at asparagine 43.

It is found in the secreted. This chain is Ovomucoid, found in Dendrocygna eytoni (Plumed whistling-duck).